A 621-amino-acid polypeptide reads, in one-letter code: Signal recognition particle receptor subunit alpha homolog (621 aa).

The tract at residues 1–158 (MFDQLAVFTP…KKFEQYFRIK (158 aa)) is SRX. The segment at 167 to 217 (HINPDNFTKNGSVPQSHNKNTKKKLRDTKGKKQSTGNVGSGRKWGRDGGML) is disordered. Polar residues predominate over residues 171–183 (DNFTKNGSVPQSH). Basic residues predominate over residues 185–198 (KNTKKKLRDTKGKK). The residue at position 239 (S239) is a Phosphoserine. The interval 398 to 620 (YVFSIVGVNG…SVKWAVNTLM (223 aa)) is NG domain. GTP-binding positions include 404 to 411 (GVNGVGKS) and 510 to 514 (DTAGR). A Phosphoserine modification is found at S523. 572–575 (SKCD) contacts GTP.

Belongs to the GTP-binding SRP family. Heterodimer of an alpha and a beta chain.

The protein resides in the endoplasmic reticulum membrane. Component of the SRP (signal recognition particle) receptor (SR). Ensures, in conjunction with the signal recognition particle, the correct targeting of the nascent secretory proteins to the endoplasmic reticulum membrane system. GTP hydrolysis may enhance the fidelity of and provide unidirectionality to the targeting reaction. It is important but not essential for cell growth. May be directly involved in mitochondrial protein import. This Saccharomyces cerevisiae (strain ATCC 204508 / S288c) (Baker's yeast) protein is Signal recognition particle receptor subunit alpha homolog (SRP101).